The following is a 347-amino-acid chain: Selenide, water dikinase (347 aa).

The active site involves Cys17. Residues Lys20 and 48-50 (TRD) each bind ATP. Asp51 contacts Mg(2+). ATP-binding positions include Asp68, Asp91, and 139–141 (GHS). Residue Asp91 participates in Mg(2+) binding. Asp227 lines the Mg(2+) pocket.

Belongs to the selenophosphate synthase 1 family. Class I subfamily. Homodimer. Requires Mg(2+) as cofactor.

The enzyme catalyses hydrogenselenide + ATP + H2O = selenophosphate + AMP + phosphate + 2 H(+). Functionally, synthesizes selenophosphate from selenide and ATP. The chain is Selenide, water dikinase from Escherichia coli O9:H4 (strain HS).